A 125-amino-acid chain; its full sequence is Calcitonin receptor-stimulating peptide 1 (125 aa).

The N-terminal stretch at 1-25 is a signal peptide; the sequence is MGFWKFPPFLVLSILVLYQAGMFHA. The propeptide occupies 26–77; that stretch reads APFRSVFDGRFDPATLDEEESRLLLAAMVNDYEQMRTRESEKAQKTEGSRIQ. The cysteines at positions 81 and 86 are disulfide-linked.

The protein belongs to the calcitonin family.

It localises to the secreted. Functionally, stimulates cAMP production via the calcitonin receptor (CT) but not via the CT-like (CL) receptor. The chain is Calcitonin receptor-stimulating peptide 1 (CRSP1) from Ovis aries (Sheep).